Here is a 182-residue protein sequence, read N- to C-terminus: uncharacterized protein (182 aa).

The segment at 40-182 (LLKTDDDDDD…EEIQRNQKGN (143 aa)) is disordered. Over residues 52–86 (NNININNNNATITTTSTTTTTTTTSTTKTFTISTD) the composition is skewed to low complexity. The segment covering 87–100 (NYDEDVNDDQDEGD) has biased composition (acidic residues). Composition is skewed to low complexity over residues 104–134 (NNNN…NNNN) and 148–157 (DLDFNNQNNN). Residues 165 to 182 (FLSKDDNIEEIQRNQKGN) are compositionally biased toward basic and acidic residues.

This is an uncharacterized protein from Dictyostelium discoideum (Social amoeba).